We begin with the raw amino-acid sequence, 98 residues long: Cuticle protein 67, isoform A (98 aa).

6 consecutive repeat copies span residues 7–10, 15–18, 22–25, 79–82, 86–89, and 92–95.

Its function is as follows. Component of the cuticle of migratory locust which contains more than 100 different structural proteins. This chain is Cuticle protein 67, isoform A, found in Locusta migratoria (Migratory locust).